Reading from the N-terminus, the 658-residue chain is Aspartate--tRNA ligase, mitochondrial (658 aa).

E198 lines the L-aspartate pocket. The interval 226–229 (QQYK) is aspartate. R248 lines the L-aspartate pocket. Residues 248-250 (RDE) and E553 each bind ATP. R560 is an L-aspartate binding site. Residue 604 to 607 (GFDR) participates in ATP binding.

The protein belongs to the class-II aminoacyl-tRNA synthetase family. Type 1 subfamily.

The protein resides in the mitochondrion matrix. The catalysed reaction is tRNA(Asp) + L-aspartate + ATP = L-aspartyl-tRNA(Asp) + AMP + diphosphate. Its function is as follows. Catalyzes the attachment of aspartate to tRNA(Asp) in the mitochondrion. The chain is Aspartate--tRNA ligase, mitochondrial (MSD1) from Saccharomyces cerevisiae (strain ATCC 204508 / S288c) (Baker's yeast).